A 333-amino-acid chain; its full sequence is Probable 4-hydroxyproline 2-epimerase (333 aa).

Cys-90 serves as the catalytic Proton acceptor. Substrate contacts are provided by residues 91–92 (GH), His-223, and Asp-249. Catalysis depends on Cys-253, which acts as the Proton donor. Position 254-255 (254-255 (GT)) interacts with substrate.

This sequence belongs to the proline racemase family.

It catalyses the reaction trans-4-hydroxy-L-proline = cis-4-hydroxy-D-proline. In terms of biological role, likely catalyzes the epimerization of trans-4-hydroxy-L-proline (t4LHyp) to cis-4-hydroxy-D-proline (c4DHyp). May be involved in the degradation pathway that converts t4LHyp to alpha-ketoglutarate, which would allow R.meliloti to grow on t4LHyp as a sole carbon source. This chain is Probable 4-hydroxyproline 2-epimerase, found in Rhizobium meliloti (strain 1021) (Ensifer meliloti).